The chain runs to 326 residues: Tagatose 1,6-diphosphate aldolase (326 aa).

It belongs to the aldolase LacD family.

The enzyme catalyses D-tagatofuranose 1,6-bisphosphate = D-glyceraldehyde 3-phosphate + dihydroxyacetone phosphate. It functions in the pathway carbohydrate metabolism; D-tagatose 6-phosphate degradation; D-glyceraldehyde 3-phosphate and glycerone phosphate from D-tagatose 6-phosphate: step 2/2. The chain is Tagatose 1,6-diphosphate aldolase from Staphylococcus aureus (strain MW2).